Consider the following 118-residue polypeptide: Putative pterin-4-alpha-carbinolamine dehydratase (118 aa).

The protein belongs to the pterin-4-alpha-carbinolamine dehydratase family.

It catalyses the reaction (4aS,6R)-4a-hydroxy-L-erythro-5,6,7,8-tetrahydrobiopterin = (6R)-L-erythro-6,7-dihydrobiopterin + H2O. This chain is Putative pterin-4-alpha-carbinolamine dehydratase, found in Xanthomonas oryzae pv. oryzae (strain MAFF 311018).